The chain runs to 49 residues: Small ribosomal subunit protein eS31 (49 aa).

The Zn(2+) site is built by Cys-21, Cys-24, Cys-39, and Cys-42. Residues 21-42 (CPRCGPGTFLADHKNRLTCGKC) form a C4-type zinc finger.

This sequence belongs to the eukaryotic ribosomal protein eS31 family. Part of the 30S ribosomal subunit. The cofactor is Zn(2+).

The polypeptide is Small ribosomal subunit protein eS31 (Methanosarcina barkeri (strain Fusaro / DSM 804)).